We begin with the raw amino-acid sequence, 687 residues long: Calcium-binding protein SP84 (687 aa).

Positions 1–19 are cleaved as a signal peptide; the sequence is MMRAIYLLVVVCWAAAANA. EF-hand domains follow at residues 152 to 187, 257 to 292, 406 to 441, 476 to 511, and 579 to 614; these read LESD…HKNK, LTEI…TDDV, KTEA…PHMV, IENA…NNDA, and MTER…VKDL. Positions 592, 594, 596, 598, and 603 each coordinate Ca(2+).

As to expression, expressed in salivary glands where expression is strongest in type III cells in the posterior lobe of the principal glands (at protein level). Not expressed in midgut, Malpighian tubules or epidermis.

It localises to the secreted. Its function is as follows. Binds calcium. During feeding of the phloem sap, protein is injected into sieve tubes of rice plants. This process may suppress the sieve-element clogging and facilitate continuous ingestion from sieve tubes. This Nephotettix cincticeps (Green rice leafhopper) protein is Calcium-binding protein SP84.